Here is a 367-residue protein sequence, read N- to C-terminus: Anthranilate phosphoribosyltransferase (367 aa).

The segment covering 1 to 17 (MVLSSEASSAADHSAAA) has biased composition (low complexity). The tract at residues 1 to 22 (MVLSSEASSAADHSAAAPIPTS) is disordered. 5-phospho-alpha-D-ribose 1-diphosphate contacts are provided by residues glycine 104, 107–108 (GD), threonine 112, 114–117 (NLST), 132–140 (KHGNRAASS), and glycine 144. Residue glycine 104 participates in anthranilate binding. Serine 116 serves as a coordination point for Mg(2+). Position 135 (asparagine 135) interacts with anthranilate. An anthranilate-binding site is contributed by arginine 190. Residues aspartate 248 and glutamate 249 each contribute to the Mg(2+) site.

It belongs to the anthranilate phosphoribosyltransferase family. Homodimer. Mg(2+) serves as cofactor.

The catalysed reaction is N-(5-phospho-beta-D-ribosyl)anthranilate + diphosphate = 5-phospho-alpha-D-ribose 1-diphosphate + anthranilate. Its pathway is amino-acid biosynthesis; L-tryptophan biosynthesis; L-tryptophan from chorismate: step 2/5. Its function is as follows. Catalyzes the transfer of the phosphoribosyl group of 5-phosphorylribose-1-pyrophosphate (PRPP) to anthranilate to yield N-(5'-phosphoribosyl)-anthranilate (PRA). The chain is Anthranilate phosphoribosyltransferase from Mycobacterium marinum (strain ATCC BAA-535 / M).